We begin with the raw amino-acid sequence, 443 residues long: D-serine dehydratase (443 aa).

N6-(pyridoxal phosphate)lysine is present on lysine 118.

It belongs to the serine/threonine dehydratase family. DsdA subfamily. As to quaternary structure, monomer. It depends on pyridoxal 5'-phosphate as a cofactor.

It carries out the reaction D-serine = pyruvate + NH4(+). The chain is D-serine dehydratase from Yersinia enterocolitica serotype O:8 / biotype 1B (strain NCTC 13174 / 8081).